The following is a 418-amino-acid chain: Light-independent protochlorophyllide reductase subunit N (418 aa).

Positions 17, 42, and 103 each coordinate [4Fe-4S] cluster.

The protein belongs to the BchN/ChlN family. Protochlorophyllide reductase is composed of three subunits; ChlL, ChlN and ChlB. Forms a heterotetramer of two ChlB and two ChlN subunits. Requires [4Fe-4S] cluster as cofactor.

It catalyses the reaction chlorophyllide a + oxidized 2[4Fe-4S]-[ferredoxin] + 2 ADP + 2 phosphate = protochlorophyllide a + reduced 2[4Fe-4S]-[ferredoxin] + 2 ATP + 2 H2O. Its pathway is porphyrin-containing compound metabolism; chlorophyll biosynthesis (light-independent). Component of the dark-operative protochlorophyllide reductase (DPOR) that uses Mg-ATP and reduced ferredoxin to reduce ring D of protochlorophyllide (Pchlide) to form chlorophyllide a (Chlide). This reaction is light-independent. The NB-protein (ChlN-ChlB) is the catalytic component of the complex. The polypeptide is Light-independent protochlorophyllide reductase subunit N (Prochlorococcus marinus (strain MIT 9313)).